Reading from the N-terminus, the 569-residue chain is Dihydroorotate dehydrogenase (quinone), mitochondrial (569 aa).

The N-terminal 23 residues, 1–23 (MISKLKPQFMFLPKKHILSYCRK), are a transit peptide targeting the mitochondrion. A helical membrane pass occupies residues 143 to 163 (IIFLLFVSLFGLYGFFESYNP). FMN is bound by residues 225 to 229 (AGFDK) and threonine 249. Lysine 229 contributes to the substrate binding site. Substrate is bound by residues 274–278 (NSCGF) and asparagine 342. Residue asparagine 342 coordinates FMN. Serine 345 (nucleophile) is an active-site residue. Asparagine 347 contributes to the substrate binding site. Lysine 429 contacts FMN. 458-459 (NT) is a substrate binding site. Residues 477–478 (SG), 505–507 (SGG), and 528–529 (YS) each bind FMN.

This sequence belongs to the dihydroorotate dehydrogenase family. Type 2 subfamily. Monomer. Requires FMN as cofactor.

Its subcellular location is the mitochondrion inner membrane. The catalysed reaction is (S)-dihydroorotate + a quinone = orotate + a quinol. The protein operates within pyrimidine metabolism; UMP biosynthesis via de novo pathway; orotate from (S)-dihydroorotate (quinone route): step 1/1. Functionally, catalyzes the conversion of dihydroorotate to orotate with quinone as electron acceptor. This chain is Dihydroorotate dehydrogenase (quinone), mitochondrial, found in Plasmodium falciparum (isolate 3D7).